Here is a 177-residue protein sequence, read N- to C-terminus: Large ribosomal subunit protein uL6 (177 aa).

This sequence belongs to the universal ribosomal protein uL6 family. In terms of assembly, part of the 50S ribosomal subunit.

In terms of biological role, this protein binds to the 23S rRNA, and is important in its secondary structure. It is located near the subunit interface in the base of the L7/L12 stalk, and near the tRNA binding site of the peptidyltransferase center. The protein is Large ribosomal subunit protein uL6 of Rhizobium johnstonii (strain DSM 114642 / LMG 32736 / 3841) (Rhizobium leguminosarum bv. viciae).